We begin with the raw amino-acid sequence, 204 residues long: Large ribosomal subunit protein uL3c (204 aa).

Residues 126–155 (HNFTRGPMTHGSKNHREPGSIGQGSTPAKV) form a disordered region.

Belongs to the universal ribosomal protein uL3 family. Part of the 50S ribosomal subunit.

It localises to the plastid. It is found in the chloroplast. Functionally, one of the primary rRNA binding proteins, it binds directly near the 3'-end of the 23S rRNA, where it nucleates assembly of the 50S subunit. The polypeptide is Large ribosomal subunit protein uL3c (rpl3) (Guillardia theta (Cryptophyte)).